A 122-amino-acid polypeptide reads, in one-letter code: UPF0102 protein CLH_1204 (122 aa).

Belongs to the UPF0102 family.

This chain is UPF0102 protein CLH_1204, found in Clostridium botulinum (strain Alaska E43 / Type E3).